Reading from the N-terminus, the 376-residue chain is E3 ubiquitin-protein ligase RNF133 (376 aa).

In terms of domain architecture, PA spans 65-167 (SSTLKRVAGV…LKGTEIFHLI (103 aa)). A helical transmembrane segment spans residues 190-210 (YLVSFVIVTTATLAYFIFYHI). An RING-type; atypical zinc finger spans residues 256–297 (CVICFEHYKPNDIVRILTCKHFFHKNCIDPWILSHGTCPICK). The interval 328-376 (TLSPSEEETNNEVSPAGTSDKVIHVEENPTSQNNDSQPHSVVEDVHPSP) is disordered. Residues 355 to 366 (NPTSQNNDSQPH) are compositionally biased toward polar residues.

Interacts with E3 ligase UBE2J1. In terms of processing, auto-ubiquitinated.

The protein localises to the endoplasmic reticulum membrane. The enzyme catalyses S-ubiquitinyl-[E2 ubiquitin-conjugating enzyme]-L-cysteine + [acceptor protein]-L-lysine = [E2 ubiquitin-conjugating enzyme]-L-cysteine + N(6)-ubiquitinyl-[acceptor protein]-L-lysine.. It participates in protein modification; protein ubiquitination. Its function is as follows. Has E3 ubiquitin-protein ligase activity. Plays a role in male fecundity through the interaction with the E2 ubituitin-protein ligase UBE2J1. In Macaca fascicularis (Crab-eating macaque), this protein is E3 ubiquitin-protein ligase RNF133 (RNF133).